Consider the following 551-residue polypeptide: MATLALSWCLPLLILLLPLATSSASAAVNGTSRFTCFYNSRANISCVWSQDGALQDTSCQVHAWPDRRRWNQTCELLPVSQASWACNLILGTPDSQKLTAVDIVTLRVMCREGVRWRMMAIQDFKPFENLRLMAPISLQVVHVETHRCNISWKISQASHYFERHLEFEARTLSPGHTWEEAPLMTLKQKQEWICLETLTPDTQYEFQVRVKPLQGEFTTWSPWSQPLAFRTKPAALGKDTIPWLGHLLVGLSGAFGFIILVYLLINCRNTGPWLKKVLKCHTPDPSKFFSQLTSEHGGDVQKWLSSPFPSSSFSPGGLAPEISPLEVLERDKVTQLLLQQDKVPEPSSLSSNRSLTSCFTNQGYFFFHLPDALEIEACQVYFTYDPCAEEEPDEGGADAPTGSSPQPLRPLSAEDDAYCTFPSGDDLLLFSPSLLGGPSPPSTAPGGSGAGEERLPPSLQERVPRDWDPQPLGPPTPGVPDLVDFQPRPELVLREAGEQVPDPGPREPFSFPWARPPGQGEVRALNARLPLNTDAYLSLQELQDQDPTHLV.

The N-terminal stretch at 1–26 (MATLALSWCLPLLILLLPLATSSASA) is a signal peptide. Residues 27–240 (AVNGTSRFTC…TKPAALGKDT (214 aa)) are Extracellular-facing. Residues N29, N43, and N71 are each glycosylated (N-linked (GlcNAc...) asparagine). Residues C36 and C46 are joined by a disulfide bond. C74 and C86 form a disulfide bridge. Residues 134 to 234 (APISLQVVHV…QPLAFRTKPA (101 aa)) enclose the Fibronectin type-III domain. N-linked (GlcNAc...) asparagine glycosylation is present at N149. Positions 220–224 (WSPWS) match the WSXWS motif motif. Residues 241–265 (IPWLGHLLVGLSGAFGFIILVYLLI) form a helical membrane-spanning segment. The Cytoplasmic portion of the chain corresponds to 266-551 (NCRNTGPWLK…LQDQDPTHLV (286 aa)). The Box 1 motif signature appears at 278–286 (LKCHTPDPS). Disordered regions lie at residues 389-417 (EEEPDEGGADAPTGSSPQPLRPLSAEDDA), 430-484 (FSPS…DLVD), and 496-517 (AGEQVPDPGPREPFSFPWARPP).

It belongs to the type I cytokine receptor family. Type 4 subfamily. In terms of assembly, non-covalent dimer of an alpha and a beta subunit. IL2R exists in 3 different forms: a high affinity dimer, an intermediate affinity monomer (beta subunit), and a low affinity monomer (alpha subunit). The high and intermediate affinity forms also associate with a gamma subunit. Interacts with SHB upon interleukin stimulation.

The protein resides in the cell membrane. It localises to the cell surface. Functionally, receptor for interleukin-2. This beta subunit is involved in receptor mediated endocytosis and transduces the mitogenic signals of IL2. Probably in association with IL15RA, involved in the stimulation of neutrophil phagocytosis by IL15. The sequence is that of Interleukin-2 receptor subunit beta (IL2RB) from Macaca fascicularis (Crab-eating macaque).